A 1283-amino-acid polypeptide reads, in one-letter code: 5-oxoprolinase PfmaA (1283 aa).

The segment at 1256–1283 is disordered; sequence NTPGGGAWGKPEGDADGYREEDQAGDGI. The span at 1266-1277 shows a compositional bias: basic and acidic residues; sequence PEGDADGYREED.

It belongs to the oxoprolinase family. As to quaternary structure, homodimer.

The catalysed reaction is 5-oxo-L-proline + ATP + 2 H2O = L-glutamate + ADP + phosphate + H(+). Its function is as follows. 5-oxoprolinase; part of the gene cluster that mediates the biosynthesis of dihydroxynaphthalene (DHN)-melanin, a bluish-green pigment forming a dark layer in the conidial wall that protects the conidia from UV radiations. The first step of the pathway is the production of the pentaketide 1,3,6,8-tetrahydroxynaphthalene (1,3,6,8-THN or T4HN) by the polyketide synthase PfmaE though condensation of acetyl-CoA with malonyl-CoA. T4HN is not stable and easily oxidizes into the stable form flaviolin. T4HN is also substrate of the hydroxynaphthalene reductase PfmaG to yield scytalone. The scytalone dehydratase PfmaJ then reduces scytalone to 1,3,8-THN. 1,3,8-THN is then substrate of the hydroxynaphthalene reductase PfmaI to yield vermelone. Vermelone is further converted by the multicopper oxidase PfmaD to 1,8-DHN. Finally the laccase PFICI_06862 transforms 1,8-DHN to DHN-melanin. The roles of the 5-oxoprolinase PfmaA and the proline iminopeptidase PfmaB within the cluster have not been elucidated yet. The sequence is that of 5-oxoprolinase PfmaA from Pestalotiopsis fici (strain W106-1 / CGMCC3.15140).